Consider the following 620-residue polypeptide: Translocator protein BipB (620 aa).

Positions 58-95 are disordered; sequence QCDAQPAAHDARLDDRPALRAPQERDAPPLGASDTGSR. Over residues 66–84 the composition is skewed to basic and acidic residues; the sequence is HDARLDDRPALRAPQERDA. The stretch at 309-339 forms a coiled coil; it reads EMQAKREAELQKKSDEYQAQVKKAEEMQKTM. The next 3 helical transmembrane spans lie at 355-375, 401-421, and 430-450; these read FAAAAFTGGASLALAAVGLAL, AILKPLMEMISSLITKALVAC, and LAGAILGAVVTGVALVAAAFV.

It belongs to the SctE/SipB/YopB family.

Its subcellular location is the secreted. It localises to the host membrane. In terms of biological role, plays a role in the bacterium-induced formation of multinucleated giant cell (MNGC), which is formed after host cell fusion, as well as in the intercellular spreading of bacteria and in the induction of apoptosis in macrophages. May act in concert with other effector proteins to induce fusion of host cell membranes. The protein is Translocator protein BipB (bipB) of Burkholderia mallei (strain NCTC 10247).